A 622-amino-acid chain; its full sequence is DNA mismatch repair protein MutL (622 aa).

It belongs to the DNA mismatch repair MutL/HexB family.

In terms of biological role, this protein is involved in the repair of mismatches in DNA. It is required for dam-dependent methyl-directed DNA mismatch repair. May act as a 'molecular matchmaker', a protein that promotes the formation of a stable complex between two or more DNA-binding proteins in an ATP-dependent manner without itself being part of a final effector complex. This is DNA mismatch repair protein MutL from Phenylobacterium zucineum (strain HLK1).